The chain runs to 905 residues: Microtubule-associated protein 10 (905 aa).

7 disordered regions span residues 30–51, 199–235, 329–362, 434–458, 547–586, 721–772, and 786–855; these read AAAVEQEEEEEEKEQGEASSPR, TRTGGGAEVSPQTQQERQQLQQPASQPSPKEADKPLG, APEEMDDASPEKKRVNPPAHRSCLKHPSSAAHEH, SPESSAKSTCRSEAKKDKRSVGGCE, SSAEQSQKPQLPEDKYLDSDASFTENSDTSRQISGVFDEP, RSFK…GSPV, and KSLE…SSYL. The span at 34–43 shows a compositional bias: acidic residues; the sequence is EQEEEEEEKE. Low complexity predominate over residues 208–227; the sequence is SPQTQQERQQLQQPASQPSP. Residues 443–453 show a composition bias toward basic and acidic residues; the sequence is CRSEAKKDKRS. The span at 567–579 shows a compositional bias: polar residues; sequence ASFTENSDTSRQI. Over residues 721-736 the composition is skewed to basic and acidic residues; that stretch reads RSFKAHDSSSRTENPK. Polar residues predominate over residues 737–748; that stretch reads HSQYTSKSSDTG. A compositionally biased stretch (low complexity) spans 790–801; sequence EASSISASDLSS. The segment covering 830–855 has biased composition (polar residues); the sequence is SVKTRSSWKSLEKSQSPQTSQVSSYL.

In terms of assembly, interacts (via middle region) with microtubules. Expressed in different cell lines (at protein level).

Its subcellular location is the cytoplasm. The protein localises to the cytoskeleton. It is found in the spindle pole. The protein resides in the microtubule organizing center. It localises to the centrosome. Its subcellular location is the midbody. In terms of biological role, microtubule-associated protein (MAP) that plays a role in the regulation of cell division; promotes microtubule stability and participates in the organization of the spindle midzone and normal progress of cytokinesis. In Homo sapiens (Human), this protein is Microtubule-associated protein 10 (MAP10).